The primary structure comprises 274 residues: DegV domain-containing protein Cgl2349/cg2579 (274 aa).

A DegV domain is found at 3 to 259 (VRVIVDSSAC…PGAVSVSAVF (257 aa)). Residues threonine 39 and serine 73 each coordinate hexadecanoate.

In terms of assembly, monomer.

In terms of biological role, binds long-chain fatty acids, such as palmitate, and may play a role in lipid transport or fatty acid metabolism. The polypeptide is DegV domain-containing protein Cgl2349/cg2579 (Corynebacterium glutamicum (strain ATCC 13032 / DSM 20300 / JCM 1318 / BCRC 11384 / CCUG 27702 / LMG 3730 / NBRC 12168 / NCIMB 10025 / NRRL B-2784 / 534)).